The primary structure comprises 387 residues: DNA double-strand break repair protein Mre11 (387 aa).

Mn(2+)-binding residues include Asp-11, His-13, Asp-52, and Asp-87. The Proton donor role is filled by His-88. Mn(2+)-binding residues include His-159, His-190, and His-192.

This sequence belongs to the MRE11/RAD32 family. Homodimer. Forms a heterotetramer composed of two Mre11 subunits and two Rad50 subunits. Interacts with HerA. Mn(2+) is required as a cofactor.

Its activity is regulated as follows. Nuclease activity is regulated by Rad50. Part of the Rad50/Mre11 complex, which is involved in the early steps of DNA double-strand break (DSB) repair. The complex may facilitate opening of the processed DNA ends to aid in the recruitment of HerA and NurA. Mre11 binds to DSB ends and has both double-stranded 3'-5' exonuclease activity and single-stranded endonuclease activity. This chain is DNA double-strand break repair protein Mre11, found in Sulfurisphaera tokodaii (strain DSM 16993 / JCM 10545 / NBRC 100140 / 7) (Sulfolobus tokodaii).